Here is a 167-residue protein sequence, read N- to C-terminus: Transcription antitermination protein NusB (167 aa).

This sequence belongs to the NusB family.

Involved in transcription antitermination. Required for transcription of ribosomal RNA (rRNA) genes. Binds specifically to the boxA antiterminator sequence of the ribosomal RNA (rrn) operons. The chain is Transcription antitermination protein NusB from Nitrosomonas europaea (strain ATCC 19718 / CIP 103999 / KCTC 2705 / NBRC 14298).